We begin with the raw amino-acid sequence, 428 residues long: MKTNLWNGFIDVVKREVVPALGCTEPVSVALAAAIAVEKLNGTVEKITALVSPNLMKNGMGVGVPGTGMVGLPIAAAVGAIAGEANAQLEVLKNITPEDVAHAKILIDAGNVHVGVADVNNILYAKVTVTSGDEFVAVTIADSHTHVMAIEENGITTYIAEPANTATSVKKTSPFEGALLEDIYDFALNAPLEEICFIEHAAELNDALSEEGLTGKYGLQIGATFQRNVDRGLLSGGLLTDVLRRTAAASDARMDGAMKPAMSNSGSGNQGIAATMPVVVVADFLKVDKEKTIRALMLSHLTAIYIKSHQNKLSALCGATTASMGAVAGMTWLLGGDLNKINNAICSMIGDIAGIICDGAKTSCAMKVSSSAGSAVKSALMALDGIYVTGNEGIVADNADASIRNLSALANGSMTQTDVQILDIMVNK.

The protein belongs to the UPF0597 family.

The chain is UPF0597 protein PBPRB0240 from Photobacterium profundum (strain SS9).